Here is a 49-residue protein sequence, read N- to C-terminus: Small, acid-soluble spore protein K (49 aa).

The tract at residues Met-1–Arg-49 is disordered. Over residues Pro-39–Arg-49 the composition is skewed to basic and acidic residues.

This sequence belongs to the SspK family.

Its subcellular location is the spore core. In Bacillus pumilus (strain SAFR-032), this protein is Small, acid-soluble spore protein K.